The following is a 318-amino-acid chain: Deoxyribose-phosphate aldolase (318 aa).

D155 serves as the catalytic Proton donor/acceptor. K218 (schiff-base intermediate with acetaldehyde) is an active-site residue. K254 functions as the Proton donor/acceptor in the catalytic mechanism.

It belongs to the DeoC/FbaB aldolase family. DeoC type 2 subfamily. As to quaternary structure, interacts with YBX1.

It is found in the cytoplasm. The protein resides in the cytoplasmic granule. It localises to the nucleus. It carries out the reaction 2-deoxy-D-ribose 5-phosphate = D-glyceraldehyde 3-phosphate + acetaldehyde. The protein operates within carbohydrate degradation; 2-deoxy-D-ribose 1-phosphate degradation; D-glyceraldehyde 3-phosphate and acetaldehyde from 2-deoxy-alpha-D-ribose 1-phosphate: step 2/2. In terms of biological role, catalyzes a reversible aldol reaction between acetaldehyde and D-glyceraldehyde 3-phosphate to generate 2-deoxy-D-ribose 5-phosphate. Participates in stress granule (SG) assembly. May allow ATP production from extracellular deoxyinosine in conditions of energy deprivation. This Mus musculus (Mouse) protein is Deoxyribose-phosphate aldolase (Dera).